The chain runs to 359 residues: Phosphoribosylformylglycinamidine cyclo-ligase (359 aa).

It belongs to the AIR synthase family.

The protein localises to the cytoplasm. The enzyme catalyses 2-formamido-N(1)-(5-O-phospho-beta-D-ribosyl)acetamidine + ATP = 5-amino-1-(5-phospho-beta-D-ribosyl)imidazole + ADP + phosphate + H(+). It participates in purine metabolism; IMP biosynthesis via de novo pathway; 5-amino-1-(5-phospho-D-ribosyl)imidazole from N(2)-formyl-N(1)-(5-phospho-D-ribosyl)glycinamide: step 2/2. The protein is Phosphoribosylformylglycinamidine cyclo-ligase of Brucella canis (strain ATCC 23365 / NCTC 10854 / RM-666).